Reading from the N-terminus, the 422-residue chain is Isocitrate dehydrogenase [NADP] (422 aa).

Residue Thr-94 participates in NADP(+) binding. Residues Ser-103, Asn-105, Arg-109, Arg-119, and Arg-143 each coordinate D-threo-isocitrate. A Mg(2+)-binding site is contributed by Asp-310. NADP(+) contacts are provided by residues 344-350, Asn-357, Tyr-396, and Arg-400; that span reads HGTAPKY.

It belongs to the isocitrate and isopropylmalate dehydrogenases family. Homodimer. Mg(2+) is required as a cofactor. Requires Mn(2+) as cofactor.

It carries out the reaction D-threo-isocitrate + NADP(+) = 2-oxoglutarate + CO2 + NADPH. Its function is as follows. Catalyzes the oxidative decarboxylation of isocitrate to 2-oxoglutarate and carbon dioxide with the concomitant reduction of NADP(+). This chain is Isocitrate dehydrogenase [NADP] (icd), found in Staphylococcus aureus (strain MSSA476).